Consider the following 232-residue polypeptide: 7-cyano-7-deazaguanine synthase (232 aa).

8–18 lines the ATP pocket; that stretch reads FSGGQDSTTCL. Positions 187, 196, 199, and 202 each coordinate Zn(2+).

It belongs to the QueC family. The cofactor is Zn(2+).

The enzyme catalyses 7-carboxy-7-deazaguanine + NH4(+) + ATP = 7-cyano-7-deazaguanine + ADP + phosphate + H2O + H(+). Its pathway is purine metabolism; 7-cyano-7-deazaguanine biosynthesis. Functionally, catalyzes the ATP-dependent conversion of 7-carboxy-7-deazaguanine (CDG) to 7-cyano-7-deazaguanine (preQ(0)). The sequence is that of 7-cyano-7-deazaguanine synthase from Vibrio campbellii (strain ATCC BAA-1116).